The chain runs to 356 residues: MAGLKLQAVTKSWDGKTQVIKPLTLDVADGEFIVMVGPSGCGKSTLLRMVAGLERVTEGDIWINDQRVTEMEPKDRGIAMVFQNYALYPHMSVEENMAWGLKIRGMGKQQIAERVKEAARILELDGLLKRRPRELSGGQRQRVAMGRAIVRDPAVFLFDEPLSNLDAKLRVQMRLELQQLHRRLKTTSLYVTHDQVEAMTLAQRVMVMNGGVAEQIGTPVEVYEKPASLFVASFIGSPAMNLLTGRVNNEGTHFELDGGIVLPLNGGYRQYAGRKMTLGIRPEHIALSSQAEGGVPLVMDTLEILGADNLAHGRWGEQKLVVRLAHQERPTAGSTLWLHLAENQLHLFDGETGQRV.

Positions 4-235 (LKLQAVTKSW…PASLFVASFI (232 aa)) constitute an ABC transporter domain. Residue 37–44 (GPSGCGKS) participates in ATP binding.

It belongs to the ABC transporter superfamily. sn-glycerol-3-phosphate importer (TC 3.A.1.1.3) family. The complex is composed of two ATP-binding proteins (UgpC), two transmembrane proteins (UgpA and UgpE) and a solute-binding protein (UgpB).

The protein resides in the cell inner membrane. The catalysed reaction is sn-glycerol 3-phosphate(out) + ATP + H2O = sn-glycerol 3-phosphate(in) + ADP + phosphate + H(+). Part of the ABC transporter complex UgpBAEC involved in sn-glycerol-3-phosphate (G3P) import. Responsible for energy coupling to the transport system. The chain is sn-glycerol-3-phosphate import ATP-binding protein UgpC from Shigella sonnei (strain Ss046).